A 461-amino-acid chain; its full sequence is Diaboline synthase (461 aa).

Active-site proton acceptor residues include histidine 185 and aspartate 400.

Belongs to the plant acyltransferase family. As to quaternary structure, monomer.

Its subcellular location is the cytoplasm. The enzyme catalyses 17,18-epoxy-17-hydroxycur-19-ene + acetyl-CoA = diaboline + CoA. Its pathway is alkaloid biosynthesis. Acetyltransferase involved in the biosynthesis of curare monoterpene indole alkaloids (MIAs), natural products such as diaboline, a pharmacologically active compound used to regulate blood pressure. Curare alkaloids act as animal glycine receptor antagonists. Catalyzes the conversion of 17,18-epoxy-17-hydroxycur-19-ene (Wieland-Gumlich aldehyde) to diaboline. The sequence is that of Diaboline synthase from Strychnos sp.